The primary structure comprises 207 residues: Outer-membrane lipoprotein LolB (207 aa).

The first 21 residues, 1–21, serve as a signal peptide directing secretion; that stretch reads MPLPDFRLIRLLPLAALVLTA. Cys22 carries the N-palmitoyl cysteine lipid modification. Cys22 carries the S-diacylglycerol cysteine lipid modification.

Belongs to the LolB family. As to quaternary structure, monomer.

It localises to the cell outer membrane. In terms of biological role, plays a critical role in the incorporation of lipoproteins in the outer membrane after they are released by the LolA protein. The protein is Outer-membrane lipoprotein LolB of Escherichia coli O7:K1 (strain IAI39 / ExPEC).